The chain runs to 241 residues: Small ribosomal subunit protein eS4 (241 aa).

The 63-residue stretch at 37 to 99 (IPLGLLLRDY…ADLYLRIVPD (63 aa)) folds into the S4 RNA-binding domain.

The protein belongs to the eukaryotic ribosomal protein eS4 family.

The sequence is that of Small ribosomal subunit protein eS4 from Metallosphaera sedula (strain ATCC 51363 / DSM 5348 / JCM 9185 / NBRC 15509 / TH2).